The chain runs to 419 residues: G protein-activated inward rectifier potassium channel 4 (419 aa).

Residues 1–24 (MAGDSRNAMNQDMEIGVTPRDPKK) are disordered. Topologically, residues 1–86 (MAGDSRNAMN…LFTTLVDLKW (86 aa)) are cytoplasmic. S5 carries the phosphoserine modification. Residues 87–111 (RFNLLVFTMVYTITWLFFGFIWWLI) form a helical membrane-spanning segment. Topologically, residues 112 to 135 (AYIRGDLDHVGDREWIPCVENLSG) are extracellular. The helical; Pore-forming intramembrane region spans 136–147 (FVSAFLFSIETE). Positions 148-154 (TTIGYGF) form an intramembrane region, pore-forming. The Selectivity filter motif lies at 149–154 (TIGYGF). The Extracellular portion of the chain corresponds to 155 to 163 (RVITEKCPE). Residues 164–185 (GIVLLLVQAILGSIVNAFMVGC) traverse the membrane as a helical segment. Over 186 to 419 (MFVKISQPKK…SGSQETKDSA (234 aa)) the chain is Cytoplasmic. The disordered stretch occupies residues 381–419 (PSPPLPGGCVGAELGAEAEQEGEEEPEGLSGSQETKDSA). Acidic residues predominate over residues 396-407 (AEAEQEGEEEPE).

The protein belongs to the inward rectifier-type potassium channel (TC 1.A.2.1) family. KCNJ5 subfamily. As to quaternary structure, associates with KCNJ3/GIRK1 or KCNJ6/GIRK2 to form a G-protein-activated heteromultimer pore-forming unit. The resulting inward current is much larger.

The protein resides in the membrane. It carries out the reaction K(+)(in) = K(+)(out). With respect to regulation, heteromultimer composed of KCNJ3/GIRK1 and KCNJ5/GIRK4 is activated by phosphatidylinositol 4,5 biphosphate (PtdIns(4,5)P2). Functionally, inward rectifier potassium channels are characterized by a greater tendency to allow potassium to flow into the cell rather than out of it. Their voltage dependence is regulated by the concentration of extracellular potassium; as external potassium is raised, the voltage range of the channel opening shifts to more positive voltages. The inward rectification is mainly due to the blockage of outward current by internal magnesium. This receptor plays a crucial role in regulating the heartbeat. Can be blocked by external barium. This potassium channel is controlled by G proteins. The sequence is that of G protein-activated inward rectifier potassium channel 4 (KCNJ5) from Bos taurus (Bovine).